The following is a 617-amino-acid chain: Sodium-dependent noradrenaline transporter (617 aa).

Residues 1–23 (MLLARMNPQVQPENNGADTGPEQ) form a disordered region. Residues 1 to 62 (MLLARMNPQV…AQPRETWGKK (62 aa)) are Cytoplasmic-facing. Over residues 8 to 17 (PQVQPENNGA) the composition is skewed to polar residues. Residues 63–88 (IDFLLSVVGFAVDLANVWRFPYLCYK) traverse the membrane as a helical segment. 3 residues coordinate Na(+): glycine 71, alanine 73, and valine 74. Aspartate 75 contacts (R)-noradrenaline. Residue aspartate 75 participates in dopamine binding. Residue asparagine 78 participates in Na(+) binding. Tyrosine 87 and lysine 88 together coordinate (R)-noradrenaline. Residues 89–92 (NGGG) are Extracellular-facing. Residues 93–116 (AFLIPYTLFLIIAGMPLFYMELAL) form a helical membrane-spanning segment. Residues 117-135 (GQYNREGAATVWKICPFFK) are Cytoplasmic-facing. A helical transmembrane segment spans residues 136–166 (GVGYAVILIALYVGFYYNVIIAWSLYYLFSS). Residues alanine 145 and glycine 149 each contribute to the (R)-noradrenaline site. Alanine 145 serves as a coordination point for dopamine. Residues 167-233 (FTLNLPWTDC…SSGIHDIGLP (67 aa)) lie on the Extracellular side of the membrane. A disulfide bridge connects residues cysteine 176 and cysteine 185. N-linked (GlcNAc...) asparagine glycosylation is found at asparagine 184, asparagine 192, and asparagine 198. The helical transmembrane segment at 234 to 254 (QWQLLLCLMVVVIVLYFSLWK) threads the bilayer. The Cytoplasmic portion of the chain corresponds to 255-257 (GVK). The helical transmembrane segment at 258-282 (TSGKVVWITATLPYFVLFVLLVHGV) threads the bilayer. Residues 283-306 (TLPGASNGINAYLHIDFYRLKEAT) are Extracellular-facing. A helical transmembrane segment spans residues 307–332 (VWIDAATQIFFSLGAGFGVLIAFASY). Residue phenylalanine 317 coordinates (R)-noradrenaline. Position 317 (phenylalanine 317) interacts with dopamine. Serine 318 contributes to the Na(+) binding site. The Cytoplasmic segment spans residues 333-338 (NKFDNN). A helical membrane pass occupies residues 339-362 (CYRDALLTSSINCITSFVSGFAIF). Asparagine 350 contributes to the Na(+) binding site. At 363-402 (SILGYMAHEHKVNIEDVATEGAGLVFILYPEAISTLSGST) the chain is on the extracellular side. Glutamate 382 provides a ligand contact to (R)-noradrenaline. Glutamate 382 is a binding site for dopamine. The chain crosses the membrane as a helical span at residues 403-428 (FWAVVFFVMLLALGLDSSMGGMEAVI). Na(+) is bound by residues aspartate 418 and serine 419. Residues 429–443 (TGLADDFQVLKRHRK) lie on the Cytoplasmic side of the membrane. The helical transmembrane segment at 444-464 (LFTFGVTFSTFLLALFCITKG) threads the bilayer. Residue glycine 465 is a topological domain, extracellular. A helical transmembrane segment spans residues 466 to 492 (IYVLTLLDTFAAGTSILFAVLMEAIGV). Over 493–522 (SWFYGVDRFSNDIQQMMGFRPGLYWRLCWK) the chain is Cytoplasmic. Residues 523-545 (FVSPAFLLFVVVVSIINFKPLTY) traverse the membrane as a helical segment. Residues 546–548 (DDY) lie on the Extracellular side of the membrane. The helical transmembrane segment at 549–569 (IFPPWANWVGWGIALSSMVLV) threads the bilayer. The Cytoplasmic portion of the chain corresponds to 570 to 617 (PIYVIYKFLSTQGSLWERLAYGITPENEHHLVAQRDIRQFQLQHWLAI).

It belongs to the sodium:neurotransmitter symporter (SNF) (TC 2.A.22) family. SLC6A2 subfamily. Monomer. Can form homodimers in the cell membrane; homodimerization is mostly mediated by cholesterol and lipids, and regulates neurotransmitter transport activity. Interacts with PRKCABP. Palmitoylated; palmitoylation regulates protein levels and neurotransmitter transport.

Its subcellular location is the cell membrane. It localises to the cell projection. The protein resides in the axon. The protein localises to the synapse. It is found in the synaptosome. The enzyme catalyses (R)-noradrenaline(out) + chloride(out) + Na(+)(out) = (R)-noradrenaline(in) + chloride(in) + Na(+)(in). The catalysed reaction is dopamine(out) + chloride(out) + Na(+)(out) = dopamine(in) + chloride(in) + Na(+)(in). It carries out the reaction dopamine(out) + chloride(out) + 2 Na(+)(out) = dopamine(in) + chloride(in) + 2 Na(+)(in). Inhibited by mazindol, desipramine, nomifensine and nortriptyline. Its function is as follows. Mediates sodium- and chloride-dependent transport of norepinephrine (also known as noradrenaline), the primary signaling neurotransmitter in the autonomic sympathetic nervous system. Is responsible for norepinephrine re-uptake and clearance from the synaptic cleft, thus playing a crucial role in norepinephrine inactivation and homeostasis. Can also mediate sodium- and chloride-dependent transport of dopamine. The protein is Sodium-dependent noradrenaline transporter of Homo sapiens (Human).